The chain runs to 185 residues: Elongation factor P (185 aa).

This sequence belongs to the elongation factor P family.

The protein resides in the cytoplasm. It participates in protein biosynthesis; polypeptide chain elongation. In terms of biological role, involved in peptide bond synthesis. Stimulates efficient translation and peptide-bond synthesis on native or reconstituted 70S ribosomes in vitro. Probably functions indirectly by altering the affinity of the ribosome for aminoacyl-tRNA, thus increasing their reactivity as acceptors for peptidyl transferase. The protein is Elongation factor P of Clostridium botulinum (strain Alaska E43 / Type E3).